The sequence spans 628 residues: Dihydroxy-acid dehydratase (628 aa).

Asp80 contributes to the Mg(2+) binding site. Cys121 contacts [2Fe-2S] cluster. 2 residues coordinate Mg(2+): Asp122 and Lys123. Lys123 is modified (N6-carboxylysine). [2Fe-2S] cluster is bound at residue Cys207. A Mg(2+)-binding site is contributed by Glu503. Ser529 serves as the catalytic Proton acceptor.

It belongs to the IlvD/Edd family. Homodimer. Requires [2Fe-2S] cluster as cofactor. Mg(2+) is required as a cofactor.

The catalysed reaction is (2R)-2,3-dihydroxy-3-methylbutanoate = 3-methyl-2-oxobutanoate + H2O. It catalyses the reaction (2R,3R)-2,3-dihydroxy-3-methylpentanoate = (S)-3-methyl-2-oxopentanoate + H2O. The protein operates within amino-acid biosynthesis; L-isoleucine biosynthesis; L-isoleucine from 2-oxobutanoate: step 3/4. It participates in amino-acid biosynthesis; L-valine biosynthesis; L-valine from pyruvate: step 3/4. Its function is as follows. Functions in the biosynthesis of branched-chain amino acids. Catalyzes the dehydration of (2R,3R)-2,3-dihydroxy-3-methylpentanoate (2,3-dihydroxy-3-methylvalerate) into 2-oxo-3-methylpentanoate (2-oxo-3-methylvalerate) and of (2R)-2,3-dihydroxy-3-methylbutanoate (2,3-dihydroxyisovalerate) into 2-oxo-3-methylbutanoate (2-oxoisovalerate), the penultimate precursor to L-isoleucine and L-valine, respectively. The polypeptide is Dihydroxy-acid dehydratase (Psychrobacter arcticus (strain DSM 17307 / VKM B-2377 / 273-4)).